We begin with the raw amino-acid sequence, 397 residues long: Subtilisin-like protease 3 (397 aa).

A signal peptide spans Met1 to Ala19. Positions Arg20–Ala116 are excised as a propeptide. Residues Ser35–Ala116 form the Inhibitor I9 domain. A Peptidase S8 domain is found at Thr126–Arg397. Active-site charge relay system residues include Asp158 and His189. Asn250 is a glycosylation site (N-linked (GlcNAc...) asparagine). The Charge relay system role is filled by Ser344. An N-linked (GlcNAc...) asparagine glycan is attached at Asn393.

This sequence belongs to the peptidase S8 family.

Its subcellular location is the secreted. In terms of biological role, secreted subtilisin-like serine protease with keratinolytic activity that contributes to pathogenicity. The sequence is that of Subtilisin-like protease 3 (SUB3) from Arthroderma otae (strain ATCC MYA-4605 / CBS 113480) (Microsporum canis).